Reading from the N-terminus, the 141-residue chain is uncharacterized protein (141 aa).

A run of 3 helical transmembrane segments spans residues 32-52 (LIVLIFSILIAISAYISTSII), 69-89 (IIALISTFIGGIVAWLIIAGF), and 109-129 (FTGYGFLPNIVGALITIPIAY).

The protein localises to the cell membrane. This is an uncharacterized protein from Methanocaldococcus jannaschii (strain ATCC 43067 / DSM 2661 / JAL-1 / JCM 10045 / NBRC 100440) (Methanococcus jannaschii).